The sequence spans 156 residues: Small ribosomal subunit protein uS7 (156 aa).

This sequence belongs to the universal ribosomal protein uS7 family. As to quaternary structure, part of the 30S ribosomal subunit. Contacts proteins S9 and S11.

Functionally, one of the primary rRNA binding proteins, it binds directly to 16S rRNA where it nucleates assembly of the head domain of the 30S subunit. Is located at the subunit interface close to the decoding center, probably blocks exit of the E-site tRNA. This Streptomyces avermitilis (strain ATCC 31267 / DSM 46492 / JCM 5070 / NBRC 14893 / NCIMB 12804 / NRRL 8165 / MA-4680) protein is Small ribosomal subunit protein uS7.